Here is a 193-residue protein sequence, read N- to C-terminus: Potassium-transporting ATPase KdpC subunit (193 aa).

Residues 14-34 (ITFTFLVLCGLVYPLIVTGIA) form a helical membrane-spanning segment.

This sequence belongs to the KdpC family. The system is composed of three essential subunits: KdpA, KdpB and KdpC.

The protein resides in the cell membrane. In terms of biological role, part of the high-affinity ATP-driven potassium transport (or Kdp) system, which catalyzes the hydrolysis of ATP coupled with the electrogenic transport of potassium into the cytoplasm. This subunit acts as a catalytic chaperone that increases the ATP-binding affinity of the ATP-hydrolyzing subunit KdpB by the formation of a transient KdpB/KdpC/ATP ternary complex. The sequence is that of Potassium-transporting ATPase KdpC subunit from Bacillus cereus (strain B4264).